The sequence spans 80 residues: RNA-binding protein Hfq (80 aa).

The Sm domain occupies 7–67 (ESFLNTARKK…ITTIVPHERL (61 aa)).

It belongs to the Hfq family. Homohexamer.

Its function is as follows. RNA chaperone that binds small regulatory RNA (sRNAs) and mRNAs to facilitate mRNA translational regulation in response to envelope stress, environmental stress and changes in metabolite concentrations. Also binds with high specificity to tRNAs. This is RNA-binding protein Hfq from Aquifex aeolicus (strain VF5).